The following is a 217-amino-acid chain: MSDHAEHAADAADTDAPEGDDAGGDDGEQAGDDGTSALSERVRALDADNADALADDVAALEARVETLTDELADAEDEVADLTERVQTKQADFKNYKERAKRKQEEIRERATEDLVERLLDVRDNLDRALDQEESESDEDGIREGVELTRDEFDRVLETEGVTEIRPEPGDSVDAARHEVMMRVDSDQPAGTIVDVYRPGYEMSGRVVRAAQVTVSEE.

A compositionally biased stretch (basic and acidic residues) spans 1–10 (MSDHAEHAAD). The tract at residues 1 to 39 (MSDHAEHAADAADTDAPEGDDAGGDDGEQAGDDGTSALS) is disordered. The span at 12-31 (ADTDAPEGDDAGGDDGEQAG) shows a compositional bias: acidic residues.

This sequence belongs to the GrpE family. As to quaternary structure, homodimer.

Its subcellular location is the cytoplasm. In terms of biological role, participates actively in the response to hyperosmotic and heat shock by preventing the aggregation of stress-denatured proteins, in association with DnaK and GrpE. It is the nucleotide exchange factor for DnaK and may function as a thermosensor. Unfolded proteins bind initially to DnaJ; upon interaction with the DnaJ-bound protein, DnaK hydrolyzes its bound ATP, resulting in the formation of a stable complex. GrpE releases ADP from DnaK; ATP binding to DnaK triggers the release of the substrate protein, thus completing the reaction cycle. Several rounds of ATP-dependent interactions between DnaJ, DnaK and GrpE are required for fully efficient folding. This chain is Protein GrpE, found in Halobacterium salinarum (strain ATCC 29341 / DSM 671 / R1).